Here is a 482-residue protein sequence, read N- to C-terminus: Immune evasion protein OPG047 (482 aa).

The 71-residue stretch at 20–90 (KKFKTIIEAI…SYTGKVYIDS (71 aa)) folds into the BTB domain. The BACK domain maps to 125-222 (CIECYMMGIE…SNYLSPRGIH (98 aa)). Kelch repeat units follow at residues 273-319 (VVYL…PANN), 320-363 (KLYV…SINN), 365-408 (IYVM…VFGR), 410-447 (LFLV…IVDN), and 448-482 (KLLL…GMEW).

It belongs to the orthopoxvirus OPG047 family.

Might have a role in the suppression of host immune response. The polypeptide is Immune evasion protein OPG047 (OPG047) (Cynomys gunnisoni (Gunnison's prairie dog)).